A 267-amino-acid chain; its full sequence is 4-hydroxy-tetrahydrodipicolinate reductase (267 aa).

NAD(+) contacts are provided by residues 9 to 14 and D35; that span reads GASGRM. An NADP(+)-binding site is contributed by R36. NAD(+) contacts are provided by residues 98–100 and 122–125; these read GTT and ASNF. H155 serves as the catalytic Proton donor/acceptor. Position 156 (H156) interacts with (S)-2,3,4,5-tetrahydrodipicolinate. K159 acts as the Proton donor in catalysis. 165–166 serves as a coordination point for (S)-2,3,4,5-tetrahydrodipicolinate; that stretch reads GT.

Belongs to the DapB family.

Its subcellular location is the cytoplasm. The catalysed reaction is (S)-2,3,4,5-tetrahydrodipicolinate + NAD(+) + H2O = (2S,4S)-4-hydroxy-2,3,4,5-tetrahydrodipicolinate + NADH + H(+). It catalyses the reaction (S)-2,3,4,5-tetrahydrodipicolinate + NADP(+) + H2O = (2S,4S)-4-hydroxy-2,3,4,5-tetrahydrodipicolinate + NADPH + H(+). Its pathway is amino-acid biosynthesis; L-lysine biosynthesis via DAP pathway; (S)-tetrahydrodipicolinate from L-aspartate: step 4/4. Functionally, catalyzes the conversion of 4-hydroxy-tetrahydrodipicolinate (HTPA) to tetrahydrodipicolinate. This chain is 4-hydroxy-tetrahydrodipicolinate reductase, found in Chromobacterium violaceum (strain ATCC 12472 / DSM 30191 / JCM 1249 / CCUG 213 / NBRC 12614 / NCIMB 9131 / NCTC 9757 / MK).